Reading from the N-terminus, the 273-residue chain is SPbeta prophage-derived uncharacterized protein YomF (273 aa).

A coiled-coil region spans residues 119–149 (VIETLQGLIDEAEDTIIRMNERIAECERVTK).

The polypeptide is SPbeta prophage-derived uncharacterized protein YomF (yomF) (Bacillus subtilis (strain 168)).